The primary structure comprises 189 residues: Prostaglandin-H2 D-isomerase (189 aa).

An N-terminal signal peptide occupies residues 1-24; the sequence is MAALRMLWMGLVLLGLLGFPQTPA. Gln25 carries the pyrrolidone carboxylic acid modification. An N-linked (GlcNAc...) asparagine glycan is attached at Asn51. The Nucleophile role is filled by Cys65. Asn78 is a glycosylation site (N-linked (GlcNAc...) asparagine). Cys89 and Cys186 are oxidised to a cystine.

It belongs to the calycin superfamily. Lipocalin family. In terms of assembly, monomer. Abundant in the brain and CNS, where it is expressed in tissues of the blood-brain barrier and secreted into the cerebro-spinal fluid. In the male reproductive system, it is expressed in the testis, efferent ducts and epididymis, and is secreted into the seminal fluid. In the eye, it is expressed in the pigmented epithelium of the retina and the nonpigmented epithelium of the ciliary body, and secreted into the aqueous humor. Low levels detected in various tissue fluids such as serum, normal urine, ascitic fluid and tear fluid. Also found in a number of other organs including the ear, heart and lung.

The protein localises to the rough endoplasmic reticulum. It localises to the nucleus membrane. Its subcellular location is the golgi apparatus. The protein resides in the cytoplasm. It is found in the perinuclear region. The protein localises to the secreted. It carries out the reaction prostaglandin H2 = prostaglandin D2. In terms of biological role, catalyzes the conversion of PGH2 to PGD2, a prostaglandin involved in smooth muscle contraction/relaxation and a potent inhibitor of platelet aggregation. Involved in a variety of CNS functions, such as sedation, NREM sleep and PGE2-induced allodynia, and may have an anti-apoptotic role in oligodendrocytes. Binds small non-substrate lipophilic molecules, including biliverdin, bilirubin, retinal, retinoic acid and thyroid hormone, and may act as a scavenger for harmful hydrophobic molecules and as a secretory retinoid and thyroid hormone transporter. Possibly involved in development and maintenance of the blood-brain, blood-retina, blood-aqueous humor and blood-testis barrier. It is likely to play important roles in both maturation and maintenance of the central nervous system and male reproductive system. Involved in PLA2G3-dependent maturation of mast cells. PLA2G3 is secreted by immature mast cells and acts on nearby fibroblasts upstream to PTDGS to synthesize PGD2, which in turn promotes mast cell maturation and degranulation via PTGDR. The polypeptide is Prostaglandin-H2 D-isomerase (Ptgds) (Mus musculus (Mouse)).